The primary structure comprises 395 residues: LL-diaminopimelate aminotransferase (395 aa).

Tyrosine 14 and glycine 41 together coordinate substrate. Pyridoxal 5'-phosphate is bound by residues tyrosine 71, 104-105, tyrosine 128, asparagine 174, tyrosine 205, and 233-235; these read AK and SFS. Lysine 105, tyrosine 128, and asparagine 174 together coordinate substrate. Lysine 236 bears the N6-(pyridoxal phosphate)lysine mark. Pyridoxal 5'-phosphate-binding residues include arginine 244 and asparagine 275. Residues asparagine 275 and arginine 368 each contribute to the substrate site.

This sequence belongs to the class-I pyridoxal-phosphate-dependent aminotransferase family. LL-diaminopimelate aminotransferase subfamily. Homodimer. The cofactor is pyridoxal 5'-phosphate.

The catalysed reaction is (2S,6S)-2,6-diaminopimelate + 2-oxoglutarate = (S)-2,3,4,5-tetrahydrodipicolinate + L-glutamate + H2O + H(+). Its pathway is amino-acid biosynthesis; L-lysine biosynthesis via DAP pathway; LL-2,6-diaminopimelate from (S)-tetrahydrodipicolinate (aminotransferase route): step 1/1. Its function is as follows. Involved in the synthesis of meso-diaminopimelate (m-DAP or DL-DAP), required for both lysine and peptidoglycan biosynthesis. Catalyzes the direct conversion of tetrahydrodipicolinate to LL-diaminopimelate. The polypeptide is LL-diaminopimelate aminotransferase (Chlamydia caviae (strain ATCC VR-813 / DSM 19441 / 03DC25 / GPIC) (Chlamydophila caviae)).